Here is a 218-residue protein sequence, read N- to C-terminus: Large ribosomal subunit protein bL25 (218 aa).

This sequence belongs to the bacterial ribosomal protein bL25 family. CTC subfamily. Part of the 50S ribosomal subunit; part of the 5S rRNA/L5/L18/L25 subcomplex. Contacts the 5S rRNA. Binds to the 5S rRNA independently of L5 and L18.

Functionally, this is one of the proteins that binds to the 5S RNA in the ribosome where it forms part of the central protuberance. The sequence is that of Large ribosomal subunit protein bL25 from Gluconobacter oxydans (strain 621H) (Gluconobacter suboxydans).